A 247-amino-acid chain; its full sequence is Triosephosphate isomerase (247 aa).

Substrate-binding residues include Asn10 and Lys12. His94 serves as the catalytic Electrophile. The active-site Proton acceptor is Glu164.

This sequence belongs to the triosephosphate isomerase family. In terms of assembly, homodimer.

It carries out the reaction D-glyceraldehyde 3-phosphate = dihydroxyacetone phosphate. It functions in the pathway carbohydrate biosynthesis; gluconeogenesis. It participates in carbohydrate degradation; glycolysis; D-glyceraldehyde 3-phosphate from glycerone phosphate: step 1/1. This chain is Triosephosphate isomerase (Tpi), found in Culex tarsalis (Encephalitis mosquito).